The sequence spans 298 residues: Ribonuclease HII (298 aa).

Residues Met1 to Arg57 form a disordered region. Over residues Ser8–Lys55 the composition is skewed to low complexity. The region spanning Trp85–Gly273 is the RNase H type-2 domain. Residues Asp91, Glu92, and Asp182 each contribute to the a divalent metal cation site.

Belongs to the RNase HII family. It depends on Mn(2+) as a cofactor. Mg(2+) is required as a cofactor.

Its subcellular location is the cytoplasm. It catalyses the reaction Endonucleolytic cleavage to 5'-phosphomonoester.. Endonuclease that specifically degrades the RNA of RNA-DNA hybrids. This chain is Ribonuclease HII, found in Rhodopseudomonas palustris (strain BisB5).